The chain runs to 735 residues: MRLLRVATCNLNQWAMDFDTNLRNVKESIARAKAAGAAVRVGPELELTGYGCEDHFLEQDTAAHAWECLKDILSGGYTDGILCSIGMPVIFKSVRYNCQVFCLNSKIVMIRPKISLANDGNYREFRWFSAWTFKDALVDFQLPLDISEVTSQDTVPFGYGFIQFLDVSLASETCEELFTANAPRIDLALNGVEVFVNASGSHHQLRKLSLRIDSMRNATLACGGVYMYANQQGCDGGRLYYDGCCCIAVNGDVVAQGSQFSLKDVEVLDALVDLDAVSSYRASVSSFREQASHRTKVPFVKVPYKLCKPFQSGMVPTGPVEVMYHRPEEEIAFGPSCWLWDYLRRSRASGFLLPLSGGADSSSVAAIVGCMCQLVVKDIENGDEQVKADAMRIGQYKDGEFPKDSRELAKRLFYTVYMGTENSSEGTRSRAKMLAEEIGSFHLDVPIDSIVSALLSLFERLTGKRPRYKVDGGSNTENLGLQNIQARIRMVLAFMMASLMPWVHNKSGFYLVLGSSNVDEGLRGYLTKYDCSSADINPIGSVSKQDLRAFLRWAAVHLHYSSLAEVEAAPPTAELEPIRADYNQLDEVDMGMTYEELSIYGRLRKIFRCGPVSMFQNLCHRWCGTLSPSEVADKVKHFFKYYAINRHKMTVLTPSYHAESYSPEDNRFDLRQFLYNARWPYQFRKIDELVQDMDKDGKWVNSTEGELRRRKGVRSAEGGGMGVVAVGSANPSAGS.

The CN hydrolase domain occupies 4–274; that stretch reads LRVATCNLNQ…VEVLDALVDL (271 aa). Residue Glu44 is the Proton acceptor; for glutaminase activity of the active site. Lys113 (for glutaminase activity) is an active-site residue. The Nucleophile; for glutaminase activity role is filled by Cys174. A ligase region spans residues 324 to 711; it reads YHRPEEEIAF…STEGELRRRK (388 aa). 354–361 contacts ATP; that stretch reads PLSGGADS. The active site involves Ser356.

It in the C-terminal section; belongs to the NAD synthetase family.

The enzyme catalyses deamido-NAD(+) + L-glutamine + ATP + H2O = L-glutamate + AMP + diphosphate + NAD(+) + H(+). Its pathway is cofactor biosynthesis; NAD(+) biosynthesis; NAD(+) from deamido-NAD(+) (L-Gln route): step 1/1. The chain is Glutamine-dependent NAD(+) synthetase from Oryza sativa subsp. indica (Rice).